The sequence spans 59 residues: Large ribosomal subunit protein bL32 (59 aa).

The segment at 1-25 (MAVQQNKKSPSKRGMHRSHDFLNAA) is disordered.

It belongs to the bacterial ribosomal protein bL32 family.

The polypeptide is Large ribosomal subunit protein bL32 (Paraburkholderia phymatum (strain DSM 17167 / CIP 108236 / LMG 21445 / STM815) (Burkholderia phymatum)).